We begin with the raw amino-acid sequence, 353 residues long: L-tryptophan dehydrogenase (353 aa).

Arginine 44 contributes to the NAD(+) binding site. The active-site Proton donor/acceptor is lysine 80. Residues aspartate 114, threonine 146, 176 to 181 (GLGNVG), lysine 204, and 255 to 257 (AAN) contribute to the NAD(+) site.

This sequence belongs to the Glu/Leu/Phe/Val dehydrogenases family. In terms of assembly, homodimer.

The catalysed reaction is L-tryptophan + NAD(+) + H2O = indole-3-pyruvate + NH4(+) + NADH + H(+). In terms of biological role, catalyzes the reversible oxidative deamination of L-tryptophan to indole-3-pyruvate in the presence of NAD(+). Cannot use other L-amino acids and D-Trp. Involved in the biosynthesis of scytonemin, a cyanobacterial radiation-absorbing pigment. The protein is L-tryptophan dehydrogenase of Nostoc punctiforme (strain ATCC 29133 / PCC 73102).